Consider the following 322-residue polypeptide: 4-diphosphocytidyl-2-C-methyl-D-erythritol kinase (322 aa).

Lysine 25 is an active-site residue. 110–120 (PVAGGMAGGSA) is a binding site for ATP. The active site involves aspartate 152.

It belongs to the GHMP kinase family. IspE subfamily.

The catalysed reaction is 4-CDP-2-C-methyl-D-erythritol + ATP = 4-CDP-2-C-methyl-D-erythritol 2-phosphate + ADP + H(+). Its pathway is isoprenoid biosynthesis; isopentenyl diphosphate biosynthesis via DXP pathway; isopentenyl diphosphate from 1-deoxy-D-xylulose 5-phosphate: step 3/6. In terms of biological role, catalyzes the phosphorylation of the position 2 hydroxy group of 4-diphosphocytidyl-2C-methyl-D-erythritol. In Mycolicibacterium vanbaalenii (strain DSM 7251 / JCM 13017 / BCRC 16820 / KCTC 9966 / NRRL B-24157 / PYR-1) (Mycobacterium vanbaalenii), this protein is 4-diphosphocytidyl-2-C-methyl-D-erythritol kinase.